Reading from the N-terminus, the 863-residue chain is Envelope glycoprotein gp160 (863 aa).

The signal sequence occupies residues 1–32; sequence MIVTMKAMEKRNKKLWTLYLAMALITPCLSLR. Over 33 to 684 the chain is Extracellular; sequence QLYATVYAGV…ITKWLWYIKI (652 aa). The cysteines at positions 54 and 74 are disulfide-linked. 2 N-linked (GlcNAc...) asparagine; by host glycosylation sites follow: asparagine 59 and asparagine 88. 5 cysteine pairs are disulfide-bonded: cysteine 119-cysteine 201, cysteine 126-cysteine 192, cysteine 131-cysteine 146, cysteine 214-cysteine 243, and cysteine 224-cysteine 235. The V1 stretch occupies residues 131-145; it reads CTNIAGTTNENLMKK. The V2 stretch occupies residues 146–192; the sequence is CEFNVTTVIKDKKEKKQALFYVSDLMELNETSSTNKTNSKMYTLTNC. Asparagine 149, asparagine 174, asparagine 180, asparagine 193, asparagine 225, asparagine 230, asparagine 237, asparagine 258, asparagine 285, asparagine 289, asparagine 320, asparagine 330, asparagine 350, asparagine 356, and asparagine 360 each carry an N-linked (GlcNAc...) asparagine; by host glycan. The interval 292–326 is V3; that stretch reads CERPQIDIQEMRIGPMAWYSMGIGGTAGNSSRAAY. The cysteines at positions 292 and 327 are disulfide-linked. Residues 362 to 372 are CD4-binding loop; it reads SSGGDLEVTHL. 2 disulfides stabilise this stretch: cysteine 376/cysteine 442 and cysteine 383/cysteine 415. Positions 383–415 are V4; it reads CNTAKMFNYTFSCNGTTCSVSNVSQGNNGTLPC. N-linked (GlcNAc...) asparagine; by host glycans are attached at residues asparagine 390, asparagine 396, asparagine 404, asparagine 410, asparagine 439, asparagine 445, asparagine 458, and asparagine 463. V5 regions lie at residues 458-469 and 460-469; these read NSSNNNVTFRPI and SNNNVTFRPI. The fusion peptide stretch occupies residues 514–534; that stretch reads AVGLGMLFLGVLSAAGSTMGA. Residues 576–594 are immunosuppression; that stretch reads RQLRARLLALETLLQNQQL. Cysteine 600 and cysteine 606 are joined by a disulfide. 3 N-linked (GlcNAc...) asparagine; by host glycosylation sites follow: asparagine 613, asparagine 619, and asparagine 637. The stretch at 633–667 forms a coiled coil; sequence RQISNISSTIYEEIQKAQVQQEQNEKKLLELDEWA. The tract at residues 662 to 683 is MPER; binding to GalCer; sequence ELDEWASIWNWLDITKWLWYIK. The chain crosses the membrane as a helical span at residues 685–705; it reads AIIIVGALVGVRVIMIVLNIV. Residues 706–863 are Cytoplasmic-facing; it reads KNIRQGYQPL…IRQGLERSLL (158 aa). The short motif at 712–715 is the YXXL motif; contains endocytosis signal element; that stretch reads YQPL. A Di-leucine internalization motif motif is present at residues 862–863; sequence LL.

This sequence belongs to the HIV-1 env protein family. In terms of assembly, the mature envelope protein (Env) consists of a homotrimer of non-covalently associated gp120-gp41 heterodimers. The resulting complex protrudes from the virus surface as a spike. There seems to be as few as 10 spikes on the average virion. Interacts with host CD4, CCR5 and CXCR4. Gp120 also interacts with the C-type lectins CD209/DC-SIGN and CLEC4M/DC-SIGNR (collectively referred to as DC-SIGN(R)). Gp120 and gp41 interact with GalCer. Gp120 interacts with host ITGA4/ITGB7 complex; on CD4+ T-cells, this interaction results in rapid activation of integrin ITGAL/LFA-1, which facilitates efficient cell-to-cell spreading of HIV-1. Gp120 interacts with cell-associated heparan sulfate; this interaction increases virus infectivity on permissive cells and may be involved in infection of CD4- cells. The mature envelope protein (Env) consists of a homotrimer of non-covalently associated gp120-gp41 heterodimers. The resulting complex protrudes from the virus surface as a spike. There seems to be as few as 10 spikes on the average virion. In terms of processing, highly glycosylated by host. The high number of glycan on the protein is reffered to as 'glycan shield' because it contributes to hide protein sequence from adaptive immune system. Palmitoylation of the transmembrane protein and of Env polyprotein (prior to its proteolytic cleavage) is essential for their association with host cell membrane lipid rafts. Palmitoylation is therefore required for envelope trafficking to classical lipid rafts, but not for viral replication. Post-translationally, specific enzymatic cleavages in vivo yield mature proteins. Envelope glycoproteins are synthesized as an inactive precursor that is heavily N-glycosylated and processed likely by host cell furin in the Golgi to yield the mature SU and TM proteins. The cleavage site between SU and TM requires the minimal sequence [KR]-X-[KR]-R. About 2 of the 9 disulfide bonds of gp41 are reduced by P4HB/PDI, following binding to CD4 receptor.

The protein resides in the virion membrane. It localises to the host cell membrane. It is found in the host endosome membrane. Oligomerizes in the host endoplasmic reticulum into predominantly trimers. In a second time, gp160 transits in the host Golgi, where glycosylation is completed. The precursor is then proteolytically cleaved in the trans-Golgi and thereby activated by cellular furin or furin-like proteases to produce gp120 and gp41. In terms of biological role, attaches the virus to the host lymphoid cell by binding to the primary receptor CD4. This interaction induces a structural rearrangement creating a high affinity binding site for a chemokine coreceptor like CXCR4 and/or CCR5. Acts as a ligand for CD209/DC-SIGN and CLEC4M/DC-SIGNR, which are respectively found on dendritic cells (DCs), and on endothelial cells of liver sinusoids and lymph node sinuses. These interactions allow capture of viral particles at mucosal surfaces by these cells and subsequent transmission to permissive cells. HIV subverts the migration properties of dendritic cells to gain access to CD4+ T-cells in lymph nodes. Virus transmission to permissive T-cells occurs either in trans (without DCs infection, through viral capture and transmission), or in cis (following DCs productive infection, through the usual CD4-gp120 interaction), thereby inducing a robust infection. In trans infection, bound virions remain infectious over days and it is proposed that they are not degraded, but protected in non-lysosomal acidic organelles within the DCs close to the cell membrane thus contributing to the viral infectious potential during DCs' migration from the periphery to the lymphoid tissues. On arrival at lymphoid tissues, intact virions recycle back to DCs' cell surface allowing virus transmission to CD4+ T-cells. Its function is as follows. Acts as a class I viral fusion protein. Under the current model, the protein has at least 3 conformational states: pre-fusion native state, pre-hairpin intermediate state, and post-fusion hairpin state. During fusion of viral and target intracellular membranes, the coiled coil regions (heptad repeats) assume a trimer-of-hairpins structure, positioning the fusion peptide in close proximity to the C-terminal region of the ectodomain. The formation of this structure appears to drive apposition and subsequent fusion of viral and target cell membranes. Complete fusion occurs in host cell endosomes and is dynamin-dependent, however some lipid transfer might occur at the plasma membrane. The virus undergoes clathrin-dependent internalization long before endosomal fusion, thus minimizing the surface exposure of conserved viral epitopes during fusion and reducing the efficacy of inhibitors targeting these epitopes. Membranes fusion leads to delivery of the nucleocapsid into the cytoplasm. The chain is Envelope glycoprotein gp160 from Human immunodeficiency virus type 1 group O (isolate ANT70) (HIV-1).